We begin with the raw amino-acid sequence, 319 residues long: Malate dehydrogenase (319 aa).

NAD(+)-binding positions include 10–15 (GAGNIG) and Asp34. The substrate site is built by Arg83 and Arg89. Residues Asn96 and 119-121 (ITN) contribute to the NAD(+) site. Residues Asn121 and Arg152 each contribute to the substrate site. His176 acts as the Proton acceptor in catalysis.

Belongs to the LDH/MDH superfamily. MDH type 3 family.

It carries out the reaction (S)-malate + NAD(+) = oxaloacetate + NADH + H(+). Catalyzes the reversible oxidation of malate to oxaloacetate. In Francisella tularensis subsp. tularensis (strain FSC 198), this protein is Malate dehydrogenase.